We begin with the raw amino-acid sequence, 244 residues long: Ribonuclease PH (244 aa).

Residues arginine 87 and 125 to 127 (GTR) contribute to the phosphate site.

The protein belongs to the RNase PH family. In terms of assembly, homohexameric ring arranged as a trimer of dimers.

It catalyses the reaction tRNA(n+1) + phosphate = tRNA(n) + a ribonucleoside 5'-diphosphate. In terms of biological role, phosphorolytic 3'-5' exoribonuclease that plays an important role in tRNA 3'-end maturation. Removes nucleotide residues following the 3'-CCA terminus of tRNAs; can also add nucleotides to the ends of RNA molecules by using nucleoside diphosphates as substrates, but this may not be physiologically important. Probably plays a role in initiation of 16S rRNA degradation (leading to ribosome degradation) during starvation. The sequence is that of Ribonuclease PH from Synechococcus sp. (strain JA-2-3B'a(2-13)) (Cyanobacteria bacterium Yellowstone B-Prime).